The following is a 295-amino-acid chain: N-acetylmuramic acid 6-phosphate etherase (295 aa).

The SIS domain occupies 53–216 (AIQRFNNGGR…STMTMIGVGK (164 aa)). The active-site Proton donor is Glu-81. The active site involves Glu-112.

It belongs to the GCKR-like family. MurNAc-6-P etherase subfamily. Homodimer.

The enzyme catalyses N-acetyl-D-muramate 6-phosphate + H2O = N-acetyl-D-glucosamine 6-phosphate + (R)-lactate. Its pathway is amino-sugar metabolism; N-acetylmuramate degradation. Functionally, specifically catalyzes the cleavage of the D-lactyl ether substituent of MurNAc 6-phosphate, producing GlcNAc 6-phosphate and D-lactate. The sequence is that of N-acetylmuramic acid 6-phosphate etherase from Staphylococcus epidermidis (strain ATCC 35984 / DSM 28319 / BCRC 17069 / CCUG 31568 / BM 3577 / RP62A).